The primary structure comprises 88 residues: Small ribosomal subunit protein uS15 (88 aa).

Belongs to the universal ribosomal protein uS15 family. As to quaternary structure, part of the 30S ribosomal subunit. Forms a bridge to the 50S subunit in the 70S ribosome, contacting the 23S rRNA.

One of the primary rRNA binding proteins, it binds directly to 16S rRNA where it helps nucleate assembly of the platform of the 30S subunit by binding and bridging several RNA helices of the 16S rRNA. Functionally, forms an intersubunit bridge (bridge B4) with the 23S rRNA of the 50S subunit in the ribosome. This Leptospira borgpetersenii serovar Hardjo-bovis (strain JB197) protein is Small ribosomal subunit protein uS15.